A 406-amino-acid polypeptide reads, in one-letter code: 2,3-bisphosphoglycerate-independent phosphoglycerate mutase (406 aa).

A disordered region spans residues V164–D184.

The protein belongs to the BPG-independent phosphoglycerate mutase family. A-PGAM subfamily.

It catalyses the reaction (2R)-2-phosphoglycerate = (2R)-3-phosphoglycerate. The protein operates within carbohydrate degradation; glycolysis; pyruvate from D-glyceraldehyde 3-phosphate: step 3/5. Catalyzes the interconversion of 2-phosphoglycerate and 3-phosphoglycerate. This Methanocorpusculum labreanum (strain ATCC 43576 / DSM 4855 / Z) protein is 2,3-bisphosphoglycerate-independent phosphoglycerate mutase.